The chain runs to 37 residues: Cytochrome b6-f complex subunit 5 (37 aa).

The chain crosses the membrane as a helical span at residues 5–25; sequence LLSGIVLGLVPVTIAGLFVTA.

This sequence belongs to the PetG family. The 4 large subunits of the cytochrome b6-f complex are cytochrome b6, subunit IV (17 kDa polypeptide, PetD), cytochrome f and the Rieske protein, while the 4 small subunits are PetG, PetL, PetM and PetN. The complex functions as a dimer.

It is found in the plastid. Its subcellular location is the chloroplast thylakoid membrane. Component of the cytochrome b6-f complex, which mediates electron transfer between photosystem II (PSII) and photosystem I (PSI), cyclic electron flow around PSI, and state transitions. PetG is required for either the stability or assembly of the cytochrome b6-f complex. This is Cytochrome b6-f complex subunit 5 from Chlorella vulgaris (Green alga).